The sequence spans 1647 residues: MATDGASCEPDASRAPEEAAGATAEAARKEFDVDTLSKSELRMLLSVMEGELEARDLVIEALRARRKEVFIQERYGRFNLNDPFLALQRDYEAGAGDKEKKPVCTNPLSILEAVMAHCRKMQERMATQLAAAESRQKKLEMEKLQLQALEQEHKKLAARLEEERGKNKQVVLMLVKECKQLSGKVIEEAQKLEEAMAKLEEEKKKTNELEEELSAEKRRSTEMEAQMEKQLSEFDTEREQLRAKLNREEAHTTDLKEEIDKMKKMIEQLKRGSDSKPSLSLPRKTKDRRLVSISVGTEGPLTRSVACQTDLAIEGTDHVKKSPLTVPGKPSPGSAKGSVCANAAHVRPGMDRQASHGDLTGSSAPSLPPASANRIEENGPSTGSTADLPSSTAPAPGSAAQSPVAAALGPAHSAQSPCTPAPAQPGLNPRVQAARFRFQGNANDPDQNGNTTQSPPSRDVSPTSRDNLVAKQLARNTVTQALSRFTSPAVGAAPRPGAPPTGDAGAYPPVGRTSLKTPGVARVDRGNPPPIPPKKPGLSQTPSPPHPQLKVIMDSSRASNAGAKVDNKTVASPPSSLPQGNRVISEENLPKSSSPQLPPKPSIDLTVAPAGCAVSALATSQVGAWPAETPGLNQPACSDSSLVIPTTTAFRSSINPVSASSCRPGASDSLLVTASGWSPSLTPLLMSGGPAPLAGRPTLLQQAAAQGNVTLLSMLLNEEGLDINYSCEDGHSALYSAAKNGHTDCVRLLLNAEAQVNAADKNGFTPLCAAAAQGHFECVELLIAYDANINHAADGGQTPLYLACKNGNKECIKLLLEAGTDRSVKTRDGWTPVHAAVDTGNVDSLKLLMYHRAPAHGNSLNEEEPESDVSDLDDGEESSEGESKPVVPADLINHADREGWTAAHIAASKGFKNCLEILCRHRGLEPERRDKCNRTVHDVATDDCKHLLENLNALKIPLRISVGEIQSGNYGSSDFECENTICVLHIRKQTSWDDFSKAVSQALTNHFQAISSDGWWSLEDTAFNNTADSDIGLSLDSVRAIMLGSVPWSAGQSFTQSPWDFMRKNKAEQVTVLLSGPQEGCLSSVAYASMIPLQMLQNYLRLVEQYHNVIFHGPEGSLQDYIVHQLALCLKHRQMAAGFSCEIVRAEVDAGFSKEQLVDLFISSACLIPVKQSPVKKKIIIILENLEKSSLSELLGDFLAPLEIRSPESPCTFQKGNGTSECYYFHENCFLMGTIAKACLQGADLLVQQHFRWVQLRWDGEPMHGLLQRFLRRKLVNKFRGQAPSPCDPVCKTIDWALSVWRQLNSCLARLGTPEALLGPKYFLSCPVVPGHAQATVKWMSKLWNAVIAPRVQEAILSRASVKRQPGFGQTTTKKHPSQGQQAVVKAALSILLNKAVLHGCPLPRAELDQHTADFKGGSFPLSLVSNYNSCSKKKENGAWRKVNTSPRRKSGRFSSPTWNKPDLSNEGIKNKTISQLNCNKNASLSKQKSLENDLSLMLNLDPRLSLGSDDEADLVKELQSMCSSKSESDISKIADSRDDLRTFDSSGNNPAFSATVNNPRMPVSQKEVSPLSSHQTTECSNNKSKTEPGVSRVKSFLPVPRSKVTQCSQNTKRSSSSSNTRQIEINNNSKEENWNLHKNEQTHRKT.

Disordered regions lie at residues Met1 to Ala27, Glu202 to Glu222, His318 to Leu427, Gly440 to Leu468, and Leu482 to Asp604. Residues Lys120 to Lys276 are a coiled coil. Over residues Ser362 to Ala372 the composition is skewed to low complexity. Over residues Gly379–Leu388 the composition is skewed to polar residues. Positions Pro389–Ala411 are enriched in low complexity. The segment covering Gly440–Asp466 has biased composition (polar residues). Residue Arg484 is modified to Asymmetric dimethylarginine. Low complexity predominate over residues Pro488–Pro509. Residues Thr569–Gln579 show a composition bias toward polar residues. ANK repeat units lie at residues Gly695 to Tyr725, Asp729 to Ala758, Asn762 to His791, Gly795 to Val824, and Asp828 to Gly857. Residues His856–Val886 are disordered. Positions Asn861 to Glu880 are enriched in acidic residues. One copy of the ANK 6 repeat lies at Glu898–Arg928. Residues Glu1436–Glu1467 are disordered. Position 1509 is a phosphoserine (Ser1509). The interval Arg1542–Thr1647 is disordered. Composition is skewed to polar residues over residues Phe1544–Asn1559 and Lys1567–Lys1584. Low complexity predominate over residues Ser1609–Gln1623. Over residues Ser1630–Thr1647 the composition is skewed to basic and acidic residues.

As to quaternary structure, interacts with CTTN/cortactin SH3 domain. Interacts with STRN, STRN4/zinedin and MOB4/phocein; this interactions mediate the association with the STRIPAK core complex and may regulate dendritic spine distribution of the STRIPAK complex in hippocampal neurons. Activation of glutamate receptors weakens the interaction with STRN and STRN4.

The protein resides in the cytoplasm. Its subcellular location is the cell cortex. It localises to the cell projection. It is found in the dendritic spine. In terms of biological role, regulates the dendritic spine distribution of CTTN/cortactin in hippocampal neurons, and thus controls dendritic spinogenesis and dendritic spine maintenance. Associates with the striatin-interacting phosphatase and kinase (STRIPAK) core complex to regulate dendritic spine distribution of the STRIPAK complex in hippocampal neurons. This Microcebus murinus (Gray mouse lemur) protein is Cortactin-binding protein 2 (CTTNBP2).